The following is a 101-amino-acid chain: Large ribosomal subunit protein eL21 (101 aa).

Positions 1–18 (MVKHSRGYRTRSRSLLRK) are enriched in basic residues. A disordered region spans residues 1 to 23 (MVKHSRGYRTRSRSLLRKSPRER).

Belongs to the eukaryotic ribosomal protein eL21 family.

The sequence is that of Large ribosomal subunit protein eL21 from Saccharolobus islandicus (strain Y.G.57.14 / Yellowstone #1) (Sulfolobus islandicus).